Reading from the N-terminus, the 103-residue chain is NADH-quinone oxidoreductase subunit K (103 aa).

The next 3 helical transmembrane spans lie at 4–24 (LTSYAFVSMMLFSIGAIGVIA), 28–48 (IFVIYMSIEMMLNGINLFLIT), and 64–84 (MVISIAAAEAAIFLSVIILLF).

This sequence belongs to the complex I subunit 4L family. In terms of assembly, NDH-1 is composed of 14 different subunits. Subunits NuoA, H, J, K, L, M, N constitute the membrane sector of the complex.

It localises to the cell inner membrane. The enzyme catalyses a quinone + NADH + 5 H(+)(in) = a quinol + NAD(+) + 4 H(+)(out). Functionally, NDH-1 shuttles electrons from NADH, via FMN and iron-sulfur (Fe-S) centers, to quinones in the respiratory chain. The immediate electron acceptor for the enzyme in this species is believed to be ubiquinone. Couples the redox reaction to proton translocation (for every two electrons transferred, four hydrogen ions are translocated across the cytoplasmic membrane), and thus conserves the redox energy in a proton gradient. The sequence is that of NADH-quinone oxidoreductase subunit K from Aliarcobacter butzleri (strain RM4018) (Arcobacter butzleri).